Consider the following 252-residue polypeptide: Imidazole glycerol phosphate synthase subunit HisF (252 aa).

Catalysis depends on residues Asp-11 and Asp-130.

It belongs to the HisA/HisF family. In terms of assembly, heterodimer of HisH and HisF.

It localises to the cytoplasm. The enzyme catalyses 5-[(5-phospho-1-deoxy-D-ribulos-1-ylimino)methylamino]-1-(5-phospho-beta-D-ribosyl)imidazole-4-carboxamide + L-glutamine = D-erythro-1-(imidazol-4-yl)glycerol 3-phosphate + 5-amino-1-(5-phospho-beta-D-ribosyl)imidazole-4-carboxamide + L-glutamate + H(+). It functions in the pathway amino-acid biosynthesis; L-histidine biosynthesis; L-histidine from 5-phospho-alpha-D-ribose 1-diphosphate: step 5/9. Functionally, IGPS catalyzes the conversion of PRFAR and glutamine to IGP, AICAR and glutamate. The HisF subunit catalyzes the cyclization activity that produces IGP and AICAR from PRFAR using the ammonia provided by the HisH subunit. The polypeptide is Imidazole glycerol phosphate synthase subunit HisF (Paramagnetospirillum magneticum (strain ATCC 700264 / AMB-1) (Magnetospirillum magneticum)).